A 262-amino-acid chain; its full sequence is Ribosomal RNA small subunit methyltransferase A (262 aa).

S-adenosyl-L-methionine contacts are provided by N14, L16, G41, E62, D87, and N109.

Belongs to the class I-like SAM-binding methyltransferase superfamily. rRNA adenine N(6)-methyltransferase family. RsmA subfamily.

It localises to the cytoplasm. The catalysed reaction is adenosine(1518)/adenosine(1519) in 16S rRNA + 4 S-adenosyl-L-methionine = N(6)-dimethyladenosine(1518)/N(6)-dimethyladenosine(1519) in 16S rRNA + 4 S-adenosyl-L-homocysteine + 4 H(+). Its function is as follows. Specifically dimethylates two adjacent adenosines (A1518 and A1519) in the loop of a conserved hairpin near the 3'-end of 16S rRNA in the 30S particle. May play a critical role in biogenesis of 30S subunits. The polypeptide is Ribosomal RNA small subunit methyltransferase A (Francisella tularensis subsp. holarctica (strain FTNF002-00 / FTA)).